The primary structure comprises 366 residues: Alanine racemase (366 aa).

The active-site Proton acceptor; specific for D-alanine is Lys40. Residue Lys40 is modified to N6-(pyridoxal phosphate)lysine. Arg136 is a binding site for substrate. Tyr263 serves as the catalytic Proton acceptor; specific for L-alanine. Met310 serves as a coordination point for substrate.

The protein belongs to the alanine racemase family. It depends on pyridoxal 5'-phosphate as a cofactor.

It catalyses the reaction L-alanine = D-alanine. It participates in amino-acid biosynthesis; D-alanine biosynthesis; D-alanine from L-alanine: step 1/1. In terms of biological role, catalyzes the interconversion of L-alanine and D-alanine. May also act on other amino acids. In Streptococcus pyogenes serotype M6 (strain ATCC BAA-946 / MGAS10394), this protein is Alanine racemase (alr).